The chain runs to 138 residues: Putative pre-16S rRNA nuclease (138 aa).

This sequence belongs to the YqgF nuclease family.

It is found in the cytoplasm. Could be a nuclease involved in processing of the 5'-end of pre-16S rRNA. The chain is Putative pre-16S rRNA nuclease from Klebsiella pneumoniae subsp. pneumoniae (strain ATCC 700721 / MGH 78578).